Reading from the N-terminus, the 1439-residue chain is Gag-Pol polyprotein (1439 aa).

G2 carries N-myristoyl glycine; by host lipidation. An interaction with Gp41 region spans residues 7-31 (VLSGGELDRWEKIRLRPGGKKKYRL). The segment at 8-43 (LSGGELDRWEKIRLRPGGKKKYRLKHIVWASRELER) is interaction with host CALM1. The tract at residues 12–19 (ELDRWEKI) is interaction with host AP3D1. The segment at 14–33 (DRWEKIRLRPGGKKKYRLKH) is interaction with membrane phosphatidylinositol 4,5-bisphosphate and RNA. A Nuclear export signal motif is present at residues 16-22 (WEKIRLR). Positions 26 to 32 (KKKYRLK) match the Nuclear localization signal motif. The tract at residues 73–77 (EELTS) is interaction with membrane phosphatidylinositol 4,5-bisphosphate. Positions 106–128 (EEQTKSMKKAQQAAADTGNSSQV) are disordered. Position 132 is a phosphotyrosine; by host (Y132). The interval 189–227 (NTVGGHQAAMQMLKETINEEAAEWDRLHPVHAGPIAPGQ) is interaction with human PPIA/CYPA and NUP153. A dimerization/Multimerization of capsid protein p24 region spans residues 277–363 (YSPVSILDIR…GGPGHKARVL (87 aa)). 2 consecutive CCHC-type zinc fingers follow at residues 390–407 (VKCF…NCRA) and 411–428 (KGCW…ECTE). The interval 493–497 (PQITL) is dimerization of protease. The region spanning 512-581 (KEALLDTGAD…TPVNIIGRNL (70 aa)) is the Peptidase A2 domain. The active-site For protease activity; shared with dimeric partner is D517. Dimerization of protease stretches follow at residues 541 to 547 (GIGGFIK) and 580 to 592 (NLLT…LNFP). One can recognise a Reverse transcriptase domain in the interval 635 to 825 (EGKISKIGPE…PPFLWMGYEL (191 aa)). D701, D776, and D777 together coordinate Mg(2+). Residues 818–826 (FLWMGYELH) are RT 'primer grip'. The short motif at 989 to 1005 (WETWWTEYWQATWIPEW) is the Tryptophan repeat motif element. Residues 1025–1148 (IVGAETFYVD…VDKLVSAGIR (124 aa)) form the RNase H type-1 domain. Mg(2+) is bound by residues D1034, E1069, D1089, and D1140. The segment at 1154–1195 (DGIDKAQEDHEKYHSNWRAMASDFNLPPIVAKEIVASCDKCQ) adopts an Integrase-type zinc-finger fold. Residues H1163, H1167, C1191, and C1194 each coordinate Zn(2+). Residues 1205 to 1355 (VDCSPGIWQL…SAGERIIDII (151 aa)) enclose the Integrase catalytic domain. Residues D1215, D1267, and E1303 each contribute to the Mg(2+) site. The segment at residues 1374–1421 (FRVYYRDNRDPIWKGPAKLLWKGEGAVVIQDNSDIKVVPRRKVKIIRD) is a DNA-binding region (integrase-type).

In terms of assembly, homotrimer; further assembles as hexamers of trimers. Interacts with gp41 (via C-terminus). Interacts with host CALM1; this interaction induces a conformational change in the Matrix protein, triggering exposure of the myristate group. Interacts with host AP3D1; this interaction allows the polyprotein trafficking to multivesicular bodies during virus assembly. Part of the pre-integration complex (PIC) which is composed of viral genome, matrix protein, Vpr and integrase. Homodimer; the homodimer further multimerizes as homohexamers or homopentamers. Interacts with human PPIA/CYPA; This interaction stabilizes the capsid. Interacts with human NUP153. Interacts with host PDZD8; this interaction stabilizes the capsid. Interacts with monkey TRIM5; this interaction destabilizes the capsid. As to quaternary structure, homodimer, whose active site consists of two apposed aspartic acid residues. In terms of assembly, heterodimer of p66 RT and p51 RT (RT p66/p51). Heterodimerization of RT is essential for DNA polymerase activity. The overall folding of the subdomains is similar in p66 RT and p51 RT but the spatial arrangements of the subdomains are dramatically different. Homotetramer; may further associate as a homohexadecamer. Part of the pre-integration complex (PIC) which is composed of viral genome, matrix protein, Vpr and integrase. Interacts with human SMARCB1/INI1 and human PSIP1/LEDGF isoform 1. Interacts with human KPNA3; this interaction might play a role in nuclear import of the pre-integration complex. Interacts with human NUP153; this interaction might play a role in nuclear import of the pre-integration complex. Requires Mg(2+) as cofactor. Specific enzymatic cleavages by the viral protease yield mature proteins. The protease is released by autocatalytic cleavage. The polyprotein is cleaved during and after budding, this process is termed maturation. Proteolytic cleavage of p66 RT removes the RNase H domain to yield the p51 RT subunit. Nucleocapsid protein p7 might be further cleaved after virus entry. In terms of processing, tyrosine phosphorylated presumably in the virion by a host kinase. Phosphorylation is apparently not a major regulator of membrane association. Post-translationally, phosphorylated possibly by host MAPK1; this phosphorylation is necessary for Pin1-mediated virion uncoating. Methylated by host PRMT6, impairing its function by reducing RNA annealing and the initiation of reverse transcription.

It is found in the host cell membrane. The protein resides in the host endosome. Its subcellular location is the host multivesicular body. It localises to the virion membrane. The protein localises to the host nucleus. It is found in the host cytoplasm. The protein resides in the virion. The enzyme catalyses Specific for a P1 residue that is hydrophobic, and P1' variable, but often Pro.. It carries out the reaction Endohydrolysis of RNA in RNA/DNA hybrids. Three different cleavage modes: 1. sequence-specific internal cleavage of RNA. Human immunodeficiency virus type 1 and Moloney murine leukemia virus enzymes prefer to cleave the RNA strand one nucleotide away from the RNA-DNA junction. 2. RNA 5'-end directed cleavage 13-19 nucleotides from the RNA end. 3. DNA 3'-end directed cleavage 15-20 nucleotides away from the primer terminus.. The catalysed reaction is 3'-end directed exonucleolytic cleavage of viral RNA-DNA hybrid.. It catalyses the reaction DNA(n) + a 2'-deoxyribonucleoside 5'-triphosphate = DNA(n+1) + diphosphate. With respect to regulation, protease: The viral protease is inhibited by many synthetic protease inhibitors (PIs), such as amprenavir, atazanavir, indinavir, loprinavir, nelfinavir, ritonavir and saquinavir. Use of protease inhibitors in tritherapy regimens permit more ambitious therapeutic strategies. Reverse transcriptase/ribonuclease H: RT can be inhibited either by nucleoside RT inhibitors (NRTIs) or by non nucleoside RT inhibitors (NNRTIs). NRTIs act as chain terminators, whereas NNRTIs inhibit DNA polymerization by binding a small hydrophobic pocket near the RT active site and inducing an allosteric change in this region. Classical NRTIs are abacavir, adefovir (PMEA), didanosine (ddI), lamivudine (3TC), stavudine (d4T), tenofovir (PMPA), zalcitabine (ddC), and zidovudine (AZT). Classical NNRTIs are atevirdine (BHAP U-87201E), delavirdine, efavirenz (DMP-266), emivirine (I-EBU), and nevirapine (BI-RG-587). The tritherapies used as a basic effective treatment of AIDS associate two NRTIs and one NNRTI. Its function is as follows. Mediates, with Gag polyprotein, the essential events in virion assembly, including binding the plasma membrane, making the protein-protein interactions necessary to create spherical particles, recruiting the viral Env proteins, and packaging the genomic RNA via direct interactions with the RNA packaging sequence (Psi). Gag-Pol polyprotein may regulate its own translation, by the binding genomic RNA in the 5'-UTR. At low concentration, the polyprotein would promote translation, whereas at high concentration, the polyprotein would encapsidate genomic RNA and then shut off translation. In terms of biological role, targets the polyprotein to the plasma membrane via a multipartite membrane-binding signal, that includes its myristoylated N-terminus. Matrix protein is part of the pre-integration complex. Implicated in the release from host cell mediated by Vpu. Binds to RNA. Forms the conical core that encapsulates the genomic RNA-nucleocapsid complex in the virion. Most core are conical, with only 7% tubular. The core is constituted by capsid protein hexamer subunits. The core is disassembled soon after virion entry. Host restriction factors such as TRIM5-alpha or TRIMCyp bind retroviral capsids and cause premature capsid disassembly, leading to blocks in reverse transcription. Capsid restriction by TRIM5 is one of the factors which restricts HIV-1 to the human species. Host PIN1 apparently facilitates the virion uncoating. On the other hand, interactions with PDZD8 or CYPA stabilize the capsid. Functionally, encapsulates and protects viral dimeric unspliced genomic RNA (gRNA). Binds these RNAs through its zinc fingers. Acts as a nucleic acid chaperone which is involved in rearangement of nucleic acid secondary structure during gRNA retrotranscription. Also facilitates template switch leading to recombination. As part of the polyprotein, participates in gRNA dimerization, packaging, tRNA incorporation and virion assembly. Its function is as follows. Aspartyl protease that mediates proteolytic cleavages of Gag and Gag-Pol polyproteins during or shortly after the release of the virion from the plasma membrane. Cleavages take place as an ordered, step-wise cascade to yield mature proteins. This process is called maturation. Displays maximal activity during the budding process just prior to particle release from the cell. Also cleaves Nef and Vif, probably concomitantly with viral structural proteins on maturation of virus particles. Hydrolyzes host EIF4GI and PABP1 in order to shut off the capped cellular mRNA translation. The resulting inhibition of cellular protein synthesis serves to ensure maximal viral gene expression and to evade host immune response. Also mediates cleavage of host YTHDF3. Mediates cleavage of host CARD8, thereby activating the CARD8 inflammasome, leading to the clearance of latent HIV-1 in patient CD4(+) T-cells after viral reactivation; in contrast, HIV-1 can evade CARD8-sensing when its protease remains inactive in infected cells prior to viral budding. In terms of biological role, multifunctional enzyme that converts the viral RNA genome into dsDNA in the cytoplasm, shortly after virus entry into the cell. This enzyme displays a DNA polymerase activity that can copy either DNA or RNA templates, and a ribonuclease H (RNase H) activity that cleaves the RNA strand of RNA-DNA heteroduplexes in a partially processive 3' to 5' endonucleasic mode. Conversion of viral genomic RNA into dsDNA requires many steps. A tRNA(3)-Lys binds to the primer-binding site (PBS) situated at the 5'-end of the viral RNA. RT uses the 3' end of the tRNA primer to perform a short round of RNA-dependent minus-strand DNA synthesis. The reading proceeds through the U5 region and ends after the repeated (R) region which is present at both ends of viral RNA. The portion of the RNA-DNA heteroduplex is digested by the RNase H, resulting in a ssDNA product attached to the tRNA primer. This ssDNA/tRNA hybridizes with the identical R region situated at the 3' end of viral RNA. This template exchange, known as minus-strand DNA strong stop transfer, can be either intra- or intermolecular. RT uses the 3' end of this newly synthesized short ssDNA to perform the RNA-dependent minus-strand DNA synthesis of the whole template. RNase H digests the RNA template except for two polypurine tracts (PPTs) situated at the 5'-end and near the center of the genome. It is not clear if both polymerase and RNase H activities are simultaneous. RNase H probably can proceed both in a polymerase-dependent (RNA cut into small fragments by the same RT performing DNA synthesis) and a polymerase-independent mode (cleavage of remaining RNA fragments by free RTs). Secondly, RT performs DNA-directed plus-strand DNA synthesis using the PPTs that have not been removed by RNase H as primers. PPTs and tRNA primers are then removed by RNase H. The 3' and 5' ssDNA PBS regions hybridize to form a circular dsDNA intermediate. Strand displacement synthesis by RT to the PBS and PPT ends produces a blunt ended, linear dsDNA copy of the viral genome that includes long terminal repeats (LTRs) at both ends. Catalyzes viral DNA integration into the host chromosome, by performing a series of DNA cutting and joining reactions. This enzyme activity takes place after virion entry into a cell and reverse transcription of the RNA genome in dsDNA. The first step in the integration process is 3' processing. This step requires a complex comprising the viral genome, matrix protein, Vpr and integrase. This complex is called the pre-integration complex (PIC). The integrase protein removes 2 nucleotides from each 3' end of the viral DNA, leaving recessed CA OH's at the 3' ends. In the second step, the PIC enters cell nucleus. This process is mediated through integrase and Vpr proteins, and allows the virus to infect a non dividing cell. This ability to enter the nucleus is specific of lentiviruses, other retroviruses cannot and rely on cell division to access cell chromosomes. In the third step, termed strand transfer, the integrase protein joins the previously processed 3' ends to the 5' ends of strands of target cellular DNA at the site of integration. The 5'-ends are produced by integrase-catalyzed staggered cuts, 5 bp apart. A Y-shaped, gapped, recombination intermediate results, with the 5'-ends of the viral DNA strands and the 3' ends of target DNA strands remaining unjoined, flanking a gap of 5 bp. The last step is viral DNA integration into host chromosome. This involves host DNA repair synthesis in which the 5 bp gaps between the unjoined strands are filled in and then ligated. Since this process occurs at both cuts flanking the HIV genome, a 5 bp duplication of host DNA is produced at the ends of HIV-1 integration. Alternatively, Integrase may catalyze the excision of viral DNA just after strand transfer, this is termed disintegration. The sequence is that of Gag-Pol polyprotein (gag-pol) from Human immunodeficiency virus type 1 group M subtype B (isolate JRCSF) (HIV-1).